A 289-amino-acid chain; its full sequence is Diaminopimelate epimerase (289 aa).

The substrate site is built by asparagine 15 and asparagine 76. Cysteine 85 (proton donor) is an active-site residue. Substrate contacts are provided by residues 86–87 (GN), asparagine 158, asparagine 191, and 209–210 (ER). The active-site Proton acceptor is cysteine 218. Residue 219-220 (GT) coordinates substrate.

This sequence belongs to the diaminopimelate epimerase family. In terms of assembly, homodimer.

It is found in the cytoplasm. The catalysed reaction is (2S,6S)-2,6-diaminopimelate = meso-2,6-diaminopimelate. The protein operates within amino-acid biosynthesis; L-lysine biosynthesis via DAP pathway; DL-2,6-diaminopimelate from LL-2,6-diaminopimelate: step 1/1. Catalyzes the stereoinversion of LL-2,6-diaminopimelate (L,L-DAP) to meso-diaminopimelate (meso-DAP), a precursor of L-lysine and an essential component of the bacterial peptidoglycan. The protein is Diaminopimelate epimerase of Streptomyces coelicolor (strain ATCC BAA-471 / A3(2) / M145).